Consider the following 252-residue polypeptide: Triosephosphate isomerase (252 aa).

8–10 (NWK) is a substrate binding site. The active-site Electrophile is the H95. E167 functions as the Proton acceptor in the catalytic mechanism. Substrate is bound by residues G173, S212, and 233-234 (GG).

It belongs to the triosephosphate isomerase family. As to quaternary structure, homodimer.

Its subcellular location is the cytoplasm. The enzyme catalyses D-glyceraldehyde 3-phosphate = dihydroxyacetone phosphate. Its pathway is carbohydrate biosynthesis; gluconeogenesis. It functions in the pathway carbohydrate degradation; glycolysis; D-glyceraldehyde 3-phosphate from glycerone phosphate: step 1/1. Functionally, involved in the gluconeogenesis. Catalyzes stereospecifically the conversion of dihydroxyacetone phosphate (DHAP) to D-glyceraldehyde-3-phosphate (G3P). This is Triosephosphate isomerase from Lawsonia intracellularis (strain PHE/MN1-00).